Consider the following 638-residue polypeptide: Zona pellucida sperm-binding protein 1 (638 aa).

Positions Met-1 to Gly-25 are cleaved as a signal peptide. Residues Arg-26 to Pro-601 lie on the Extracellular side of the membrane. An N-linked (GlcNAc...) asparagine glycan is attached at Asn-76. Positions Leu-165–Ser-175 are enriched in polar residues. A disordered region spans residues Leu-165–Leu-208. One can recognise a P-type domain in the interval Glu-234–Asn-274. Disulfide bonds link Cys-236–Cys-261, Cys-245–Cys-260, and Cys-255–Cys-270. A ZP domain is found at Gln-279–Gln-553. Asn-379 carries an N-linked (GlcNAc...) asparagine glycan. A disulfide bond links Cys-457 and Cys-478. The tract at residues Gly-549–Asn-594 is disordered. Positions Arg-554 to Gln-638 are cleaved as a propeptide — removed in mature form. N-linked (GlcNAc...) asparagine glycans are attached at residues Asn-561 and Asn-596. Residues Leu-602–Val-622 traverse the membrane as a helical segment. Topologically, residues Gly-623–Gln-638 are cytoplasmic.

Belongs to the ZP domain family. ZPB subfamily. As to quaternary structure, polymers of ZP2 and ZP3 organized into long filaments cross-linked by ZP1 homodimers. Interacts with ZP3. In terms of processing, proteolytically cleaved before the transmembrane segment to yield the secreted ectodomain incorporated in the zona pellucida. O-glycosylated. Expressed in oocytes (at protein level).

Its subcellular location is the zona pellucida. The protein resides in the cell membrane. Its function is as follows. Component of the zona pellucida, an extracellular matrix surrounding oocytes which mediates sperm binding, induction of the acrosome reaction and prevents post-fertilization polyspermy. The zona pellucida is composed of 3 to 4 glycoproteins, ZP1, ZP2, ZP3, and ZP4. ZP1 ensures the structural integrity of the zona pellucida. The sequence is that of Zona pellucida sperm-binding protein 1 (ZP1) from Homo sapiens (Human).